Reading from the N-terminus, the 258-residue chain is Synapse differentiation-inducing gene protein 1 (258 aa).

The Cytoplasmic segment spans residues 1–181; it reads MDGIIEQKSM…NFLMMPPRDH (181 aa). Ser-137 carries the phosphoserine modification. Residues 182 to 202 traverse the membrane as a helical segment; the sequence is LGLSVFSMLCCFWPLGIAAFY. The Extracellular segment spans residues 203–228; it reads LSHETNKAVAKGDLHQASTSSRRALF. Residues 229-249 constitute an intramembrane region (helical); it reads LAVLSITIGTGVYVGVAVALI. Topologically, residues 250–258 are extracellular; that stretch reads AYLSKNNHL.

The protein belongs to the CD225/Dispanin family. As to quaternary structure, homodimer. Interacts with GRIA1 and GRIA2.

The protein resides in the cell membrane. Its subcellular location is the early endosome membrane. It is found in the postsynaptic density membrane. It localises to the synapse. The protein localises to the cell projection. The protein resides in the dendrite. Its subcellular location is the dendritic spine. Functionally, may regulate AMPA receptor content at nascent synapses, and have a role in postsynaptic development and maturation. The protein is Synapse differentiation-inducing gene protein 1 (SYNDIG1) of Homo sapiens (Human).